The sequence spans 430 residues: Adenylosuccinate synthetase (430 aa).

GTP is bound by residues 13–19 and 41–43; these read GDEGKGK and GHT. Asp14 serves as the catalytic Proton acceptor. Mg(2+)-binding residues include Asp14 and Gly41. IMP is bound by residues 14–17, 39–42, Thr130, Arg144, Gln225, Thr240, and Arg304; these read DEGK and NAGH. The active-site Proton donor is the His42. 300 to 306 is a substrate binding site; sequence STTGRAR. Residues Arg306, 332–334, and 414–416 contribute to the GTP site; these read KLD and STG.

It belongs to the adenylosuccinate synthetase family. Homodimer. It depends on Mg(2+) as a cofactor.

Its subcellular location is the cytoplasm. The catalysed reaction is IMP + L-aspartate + GTP = N(6)-(1,2-dicarboxyethyl)-AMP + GDP + phosphate + 2 H(+). The protein operates within purine metabolism; AMP biosynthesis via de novo pathway; AMP from IMP: step 1/2. Functionally, plays an important role in the de novo pathway of purine nucleotide biosynthesis. Catalyzes the first committed step in the biosynthesis of AMP from IMP. In Azotobacter vinelandii (strain DJ / ATCC BAA-1303), this protein is Adenylosuccinate synthetase.